The chain runs to 246 residues: Probable chemoreceptor glutamine deamidase CheD (246 aa).

A disordered region spans residues 225–246; sequence GAGVQPAVQKAASPYAANLSRK.

This sequence belongs to the CheD family.

The catalysed reaction is L-glutaminyl-[protein] + H2O = L-glutamyl-[protein] + NH4(+). Its function is as follows. Probably deamidates glutamine residues to glutamate on methyl-accepting chemotaxis receptors (MCPs), playing an important role in chemotaxis. This is Probable chemoreceptor glutamine deamidase CheD from Burkholderia vietnamiensis (strain G4 / LMG 22486) (Burkholderia cepacia (strain R1808)).